The chain runs to 527 residues: MDVKNSPSSLNSPVSYNCGQSILPLEPGPIYLPSSYVESRHEYSAVTFYSPAVMNYSIPNNSEDGPGRQTTSPNVLWPTPGHLSPLAIHCQPSVLYAEPQKSPWRETRSLEHTLPVNRETLKRKASGSSCASPATSPSSKRDAHFCAVCSDYASGYHYGVWSCEGCKAFFKRSIQGHNDYICPATNQCTIDKNRRKSCQACRLRKCYEVGMVKCGSRRERCGYRIVRRQRNSDEQLHCLSKTKRNGGPMTRVKELLLSALSPEQLVLTLLEAEPPHVLISRPSTPFTEASMMMSLTKLADKELVHMISWAKKIPGFVELSLYDQVRLLESCWLEVLMVGLMWRSIDHPGKLIFAPDLILDRDEGKCVEGILEIFDMLLATTSRFRELKLQHKEYLCVKAMILLNSSMYPSATAPQEADSGRKLTHLLNAVTDALVWVIAKSGMSSQQQSMRLANLLMLLSHVRHASNKGMEHLLNMKCKNVVPVYDLLLEMLNAHTLRGNKSLVTGSERNLVEDSESKEGSQKPQAQ.

Residues M1–F145 are modulating. Phosphoserine; by MAPK is present on residues S84 and S102. 2 consecutive NR C4-type zinc fingers follow at residues C146–C166 and C182–C206. A DNA-binding region (nuclear receptor) is located at residues C146–M211. Positions S261 to H495 constitute an NR LBD domain.

This sequence belongs to the nuclear hormone receptor family. NR3 subfamily. Binds DNA as a homodimer. Can form a heterodimer with ESR1. Interacts with NCOA1, NCOA3, NCOA5 and NCOA6 coactivators, leading to a strong increase of transcription of target genes. Interacts with UBE1C and AKAP13. Interacts with DNTTIP2. Interacts with CCDC62 in the presence of estradiol/E2; this interaction seems to enhance the transcription of target genes. Interacts with DNAAF4. Interacts with PRMT2. Interacts with CCAR2 (via N-terminus) in a ligand-independent manner. Interacts with RBM39, in the presence of estradiol (E2). Interacts with STUB1/CHIP. In terms of processing, phosphorylation at Ser-84 and Ser-102 recruits NCOA1. As to expression, present in granulosa cells of antral follicles in various stages of follicular growth.

The protein localises to the nucleus. Its function is as follows. Nuclear hormone receptor. Binds estrogens with an affinity similar to that of ESR1ESR1/ER-alpha, and activates expression of reporter genes containing estrogen response elements (ERE) in an estrogen-dependent manner. The sequence is that of Estrogen receptor beta (ESR2) from Bos taurus (Bovine).